The chain runs to 490 residues: Inosine-5'-monophosphate dehydrogenase (490 aa).

2 consecutive CBS domains span residues M96–V154 and M158–E218. Residues D252 and G302 to G304 each bind NAD(+). Residues G304 and G306 each contribute to the K(+) site. Position 307 (S307) interacts with IMP. Residue C309 coordinates K(+). The Thioimidate intermediate role is filled by C309. IMP is bound by residues D342–G344, G365–N366, and Y389–G393. Residue R406 is the Proton acceptor of the active site. An IMP-binding site is contributed by E418. E472, S473, and H474 together coordinate K(+).

Belongs to the IMPDH/GMPR family. In terms of assembly, homotetramer. K(+) serves as cofactor.

The catalysed reaction is IMP + NAD(+) + H2O = XMP + NADH + H(+). The protein operates within purine metabolism; XMP biosynthesis via de novo pathway; XMP from IMP: step 1/1. Its activity is regulated as follows. Mycophenolic acid (MPA) is a non-competitive inhibitor that prevents formation of the closed enzyme conformation by binding to the same site as the amobile flap. In contrast, mizoribine monophosphate (MZP) is a competitive inhibitor that induces the closed conformation. MPA is a potent inhibitor of mammalian IMPDHs but a poor inhibitor of the bacterial enzymes. MZP is a more potent inhibitor of bacterial IMPDH. Functionally, catalyzes the conversion of inosine 5'-phosphate (IMP) to xanthosine 5'-phosphate (XMP), the first committed and rate-limiting step in the de novo synthesis of guanine nucleotides, and therefore plays an important role in the regulation of cell growth. The sequence is that of Inosine-5'-monophosphate dehydrogenase from Aquifex aeolicus (strain VF5).